Reading from the N-terminus, the 759-residue chain is Subtilisin-like protease SBT3.10 (759 aa).

The N-terminal stretch at 1–25 (MSKTIILLAFFLSIVLNVQISFVVA) is a signal peptide. Positions 26–108 (ESKVYVVYLG…VIPNTLYEMT (83 aa)) are cleaved as a propeptide — activation peptide. Residues 29–106 (VYVVYLGEKE…VQVIPNTLYE (78 aa)) enclose the Inhibitor I9 domain. In terms of domain architecture, Peptidase S8 spans 112-606 (TWDYLGVSPG…GGLINPEKAV (495 aa)). Asp-142 functions as the Charge relay system in the catalytic mechanism. N-linked (GlcNAc...) asparagine glycosylation is found at Asn-175 and Asn-202. The active-site Charge relay system is His-218. Asn-233 and Asn-361 each carry an N-linked (GlcNAc...) asparagine glycan. Residues 390–464 (DCEKLSANPK…ELGTDILFYI (75 aa)) enclose the PA domain. Ser-537 serves as the catalytic Charge relay system.

It belongs to the peptidase S8 family.

The protein localises to the secreted. This Arabidopsis thaliana (Mouse-ear cress) protein is Subtilisin-like protease SBT3.10.